We begin with the raw amino-acid sequence, 673 residues long: UPF0313 protein blr7973 (673 aa).

The 280-residue stretch at alanine 332 to aspartate 611 folds into the Radical SAM core domain. Residues cysteine 346, cysteine 350, and cysteine 353 each contribute to the [4Fe-4S] cluster site. A disordered region spans residues arginine 632–lysine 673.

Belongs to the UPF0313 family. [4Fe-4S] cluster serves as cofactor.

The sequence is that of UPF0313 protein blr7973 from Bradyrhizobium diazoefficiens (strain JCM 10833 / BCRC 13528 / IAM 13628 / NBRC 14792 / USDA 110).